We begin with the raw amino-acid sequence, 461 residues long: Asparagine--tRNA ligase (461 aa).

This sequence belongs to the class-II aminoacyl-tRNA synthetase family. As to quaternary structure, homodimer.

It is found in the cytoplasm. It carries out the reaction tRNA(Asn) + L-asparagine + ATP = L-asparaginyl-tRNA(Asn) + AMP + diphosphate + H(+). The chain is Asparagine--tRNA ligase from Oleidesulfovibrio alaskensis (strain ATCC BAA-1058 / DSM 17464 / G20) (Desulfovibrio alaskensis).